The following is a 176-amino-acid chain: Inorganic pyrophosphatase (176 aa).

Substrate-binding residues include K30, R44, and Y56. 3 residues coordinate Mg(2+): D66, D71, and D103. Y142 provides a ligand contact to substrate.

It belongs to the PPase family. Homohexamer. Mg(2+) serves as cofactor.

It localises to the cytoplasm. It catalyses the reaction diphosphate + H2O = 2 phosphate + H(+). In terms of biological role, catalyzes the hydrolysis of inorganic pyrophosphate (PPi) forming two phosphate ions. This chain is Inorganic pyrophosphatase, found in Vibrio cholerae serotype O1 (strain ATCC 39315 / El Tor Inaba N16961).